The following is a 366-amino-acid chain: Chorismate synthase (366 aa).

Arg46 contributes to the NADP(+) binding site. FMN is bound by residues 122-124 (RSS), 243-244 (NG), Gly284, 299-303 (KPTPS), and Arg325.

The protein belongs to the chorismate synthase family. Homotetramer. Requires FMNH2 as cofactor.

It catalyses the reaction 5-O-(1-carboxyvinyl)-3-phosphoshikimate = chorismate + phosphate. It participates in metabolic intermediate biosynthesis; chorismate biosynthesis; chorismate from D-erythrose 4-phosphate and phosphoenolpyruvate: step 7/7. Functionally, catalyzes the anti-1,4-elimination of the C-3 phosphate and the C-6 proR hydrogen from 5-enolpyruvylshikimate-3-phosphate (EPSP) to yield chorismate, which is the branch point compound that serves as the starting substrate for the three terminal pathways of aromatic amino acid biosynthesis. This reaction introduces a second double bond into the aromatic ring system. The sequence is that of Chorismate synthase from Campylobacter hominis (strain ATCC BAA-381 / DSM 21671 / CCUG 45161 / LMG 19568 / NCTC 13146 / CH001A).